The chain runs to 521 residues: MSRFLRGLTILWVVFRYGLDELVLSSFEHPWMRRARAVLTLGRRLDKPRGQRLREALEELGPIFVKFGQVLSTRSDLMPPDVAEELARLQDRVPPFDSQIAVDTIERAFRKKLDQIFVSFEREPVASASIAQVHFAVISDRNGVQRDVAVKVLRPGMKTVIDKDLALMHMMARWVERLSADGKRLKPRQVVAEFDNYLHDELDLIREASNAAQLRRNMEGLDLVLIPEVYWDFCRSDVMVMQRMTGVPISQVERLREAGVDIPKLARDGVTIFFTQVFRDGFFHADMHPGNIMVSLEPETFGRYISLDFGIVGTLTEYDKEYLAQNFTAFFRRDYKRVAELHIESGWVPPSTRVDELEAAIRAVCEPYFDRPLAEISLGMVLMRLFQTSRRFQVEIQPQLVLLQKTLLNIEGLGRQLDPNLDLWSTAKPFLEKWMLDQMGPQRLWRELLAEAPRYAKLIPELPRLIHRRLTRNSGEHDELLKELLQQQKLTNRLLQAIVSAGIGFVIALILLQLVVRLRWY.

The 379-residue stretch at 119 to 497 (SFEREPVASA…QKLTNRLLQA (379 aa)) folds into the Protein kinase domain. Residues 125-133 (VASASIAQV) and lysine 151 contribute to the ATP site. Residue aspartate 286 is the Proton acceptor of the active site. The chain crosses the membrane as a helical span at residues 496 to 516 (QAIVSAGIGFVIALILLQLVV).

The protein belongs to the ABC1 family. UbiB subfamily.

It is found in the cell inner membrane. It functions in the pathway cofactor biosynthesis; ubiquinone biosynthesis [regulation]. Functionally, is probably a protein kinase regulator of UbiI activity which is involved in aerobic coenzyme Q (ubiquinone) biosynthesis. The protein is Probable protein kinase UbiB of Delftia acidovorans (strain DSM 14801 / SPH-1).